Reading from the N-terminus, the 276-residue chain is Undecaprenyl-diphosphatase (276 aa).

A run of 6 helical transmembrane segments spans residues 43–63, 85–105, 109–129, 184–204, 218–238, and 254–274; these read RAMAFNIIIQLGAILAVVWEF, INLLIAFLPAVVLGVIFADLI, LFNPITVATALVVGGLIMLWA, ATEFSFFLAMPTMVGAAVYSG, VFAIGFVTAFVFAMIAVKGLL, and IAFGLLILATWQFGWVDWTAA.

Belongs to the UppP family.

Its subcellular location is the cell inner membrane. The catalysed reaction is di-trans,octa-cis-undecaprenyl diphosphate + H2O = di-trans,octa-cis-undecaprenyl phosphate + phosphate + H(+). In terms of biological role, catalyzes the dephosphorylation of undecaprenyl diphosphate (UPP). Confers resistance to bacitracin. The protein is Undecaprenyl-diphosphatase of Pseudomonas fluorescens (strain ATCC BAA-477 / NRRL B-23932 / Pf-5).